The sequence spans 58 residues: MKFIIVLLLLTALTLTSIPVIEGILKRCKTYDDCKDVCKARKGKCEFGICKCMIKSGK.

The N-terminal stretch at 1–23 (MKFIIVLLLLTALTLTSIPVIEG) is a signal peptide. A cross-link (cyclopeptide (Ile-Lys)) is located at residues 24–55 (ILKRCKTYDDCKDVCKARKGKCEFGICKCMIK). Disulfide bonds link cysteine 28–cysteine 45, cysteine 34–cysteine 50, and cysteine 38–cysteine 52. The residue at position 56 (serine 56) is a Serine amide.

Post-translationally, this is a cyclic peptide. In terms of tissue distribution, expressed by the venom gland.

The protein resides in the secreted. Its function is as follows. First cyclic scorpion trypsin inhibitor (Kd~0.5 nM). Does not inhibit chymotrypsin. The protein is Cyclotide trypsin inhibitor TopI1 of Tityus obscurus (Amazonian scorpion).